A 423-amino-acid polypeptide reads, in one-letter code: ATP-citrate synthase alpha chain protein 1 (423 aa).

3 residues coordinate citrate: Asn343, Thr345, and Arg376.

Belongs to the succinate/malate CoA ligase beta subunit family. As to quaternary structure, heterooctamer of 4 alpha and 4 beta chains. As to expression, expressed in trichomes, epidermal leaf cells, anther tapetal cells, stigma and in young vascular bundles of expanding leaves, cotyledons, roots, pedicel of flowers and siliques.

Its subcellular location is the cytoplasm. It is found in the cytosol. It carries out the reaction oxaloacetate + acetyl-CoA + ADP + phosphate = citrate + ATP + CoA. Functionally, ATP citrate-lyase is the primary enzyme responsible for the synthesis of cytosolic acetyl-CoA, used for the elongation of fatty acids and biosynthesis of isoprenoids, flavonoids and malonated derivatives. May supply substrate to the cytosolic acetyl-CoA carboxylase, which generates the malonyl-CoA used for the synthesis of a multitude of compounds, including very long chain fatty acids and flavonoids. Required for normal growth and development and elongation of C18 fatty acids to C20 to C24 fatty acids in seeds. In contrast to all known animal ACL enzymes having a homomeric structure, plant ACLs are composed of alpha and beta chains. The polypeptide is ATP-citrate synthase alpha chain protein 1 (ACLA-1) (Arabidopsis thaliana (Mouse-ear cress)).